A 256-amino-acid polypeptide reads, in one-letter code: tRNA (guanine-N(1)-)-methyltransferase (256 aa).

S-adenosyl-L-methionine is bound by residues Gly-113 and 132–137 (VGDYVL).

Belongs to the RNA methyltransferase TrmD family. As to quaternary structure, homodimer.

It is found in the cytoplasm. The enzyme catalyses guanosine(37) in tRNA + S-adenosyl-L-methionine = N(1)-methylguanosine(37) in tRNA + S-adenosyl-L-homocysteine + H(+). Its function is as follows. Specifically methylates guanosine-37 in various tRNAs. This Coprothermobacter proteolyticus (strain ATCC 35245 / DSM 5265 / OCM 4 / BT) protein is tRNA (guanine-N(1)-)-methyltransferase.